The chain runs to 624 residues: Bifunctional 3'-phosphoadenosine 5'-phosphosulfate synthase 1 (624 aa).

N-acetylmethionine is present on M1. Residues M1–I225 are adenylyl-sulfate kinase. At K12 the chain carries N6-acetyllysine. G62 to T67 serves as a coordination point for ATP. Adenosine 5'-phosphosulfate-binding positions include D89 to R92, F101, R106 to N109, I132 to S133, K171, and G184 to F185. ATP contacts are provided by residues C207, C212, Q419–N422, G521–A525, and A563. A sulfate adenylyltransferase region spans residues V234–A624.

This sequence in the N-terminal section; belongs to the APS kinase family. The protein in the C-terminal section; belongs to the sulfate adenylyltransferase family. In terms of assembly, homodimer. As to expression, expressed in the neonatal brain and in cartilage.

It catalyses the reaction sulfate + ATP + H(+) = adenosine 5'-phosphosulfate + diphosphate. The enzyme catalyses adenosine 5'-phosphosulfate + ATP = 3'-phosphoadenylyl sulfate + ADP + H(+). Its pathway is sulfur metabolism; sulfate assimilation. In terms of biological role, bifunctional enzyme with both ATP sulfurylase and APS kinase activity, which mediates two steps in the sulfate activation pathway. The first step is the transfer of a sulfate group to ATP to yield adenosine 5'-phosphosulfate (APS), and the second step is the transfer of a phosphate group from ATP to APS yielding 3'-phosphoadenylylsulfate (PAPS: activated sulfate donor used by sulfotransferase). In mammals, PAPS is the sole source of sulfate; APS appears to be only an intermediate in the sulfate-activation pathway. Required for normal biosynthesis of sulfated L-selectin ligands in endothelial cells. This is Bifunctional 3'-phosphoadenosine 5'-phosphosulfate synthase 1 (Papss1) from Mus musculus (Mouse).